The following is a 428-amino-acid chain: MSSALTLQPVRRFSGEINLPGSKSVSNRALLLAAQARGVTRLHNLLDSDDVRYMLDALKALGVRYQLSDCRTRCEVQGLGGTLSAHGALTLFLGNAGTAMRPLAAALSLGLRDVILTGEPRMKERPIAHLVTALRQGGAQVDYLESDGYPPVRLHGGFNGGEISVDGSVSSQFLTALLMAAPMAAEETRITILGELVSKPYIAITLAMMRAFGVEVENHAYRHFVVRGGQVYQAPSDYLVEGDASSASYFLAGAAIAGGTVRVTGIGRHSMQGDIHFADVLEKMGAQVEWGNDYIACTRDSLHGIDMDMNAIPDAAMTIATTALFAKGPTTLRNIYNWRVKETDRLAAMASELRKVGAVVEEGTDFLRIEPPAQLQAAQIATYNDHRMAMCFSLVALSGTPVTICDPGCTAKTFPDYFRQFSALCHPR.

Lys-23, Ser-24, and Arg-28 together coordinate 3-phosphoshikimate. Position 23 (Lys-23) interacts with phosphoenolpyruvate. Positions 97 and 125 each coordinate phosphoenolpyruvate. Ser-170, Ser-171, Gln-172, Ser-198, Asp-314, Asn-337, and Lys-341 together coordinate 3-phosphoshikimate. A phosphoenolpyruvate-binding site is contributed by Gln-172. The active-site Proton acceptor is the Asp-314. The phosphoenolpyruvate site is built by Arg-345, Arg-387, and Lys-412.

Belongs to the EPSP synthase family. Monomer.

The protein resides in the cytoplasm. The catalysed reaction is 3-phosphoshikimate + phosphoenolpyruvate = 5-O-(1-carboxyvinyl)-3-phosphoshikimate + phosphate. The protein operates within metabolic intermediate biosynthesis; chorismate biosynthesis; chorismate from D-erythrose 4-phosphate and phosphoenolpyruvate: step 6/7. Catalyzes the transfer of the enolpyruvyl moiety of phosphoenolpyruvate (PEP) to the 5-hydroxyl of shikimate-3-phosphate (S3P) to produce enolpyruvyl shikimate-3-phosphate and inorganic phosphate. This chain is 3-phosphoshikimate 1-carboxyvinyltransferase, found in Edwardsiella ictaluri (strain 93-146).